The sequence spans 964 residues: Pumilio homolog 3 (964 aa).

Residues 1 to 22 form a disordered region; that stretch reads MMIPELGRRPMHRGNEDSSFGD. Residue Ser192 is modified to Phosphoserine. 3 disordered regions span residues 204–235, 256–300, and 343–388; these read PVVQ…ASQG, GTPD…TSGL, and DGHN…VANP. Polar residues-rich tracts occupy residues 207 to 216 and 223 to 234; these read QQPSRPASRN and DSNNNLSPSASQ. Thr257 bears the Phosphothreonine mark. Composition is skewed to polar residues over residues 287–300 and 356–384; these read TSNQ…TSGL and RSDQ…SGSG. A PUM-HD domain is found at 606–946; sequence FGSSMLEEFK…HIVARVEKLV (341 aa). Pumilio repeat units lie at residues 626–661, 662–697, 698–733, 734–769, 770–806, 807–842, 843–878, and 879–920; these read EIAG…MVYE, EIMP…ELGE, KLID…QMVK, ELDG…FIIS, TFFG…KVME, EILS…VIIK, ELAG…LLVN, and EMLG…LILT.

The protein localises to the cytoplasm. Its function is as follows. Sequence-specific RNA-binding protein that regulates translation and mRNA stability by binding the 3'-UTR of target mRNAs. Binds the APUM-binding elements (APBEs) in the 3'-UTR mRNA sequence of CLV1, PNH, WUS and FAS2. This chain is Pumilio homolog 3 (APUM3), found in Arabidopsis thaliana (Mouse-ear cress).